We begin with the raw amino-acid sequence, 555 residues long: Membrane protein insertase YidC (555 aa).

Residues 7-24 (ILWVIFSMSLVLLYDNWQ) traverse the membrane as a helical segment. The segment at 61–81 (TAGAAAPAAPGGAPQAAAQPT) is disordered. 5 helical membrane-spanning segments follow: residues 341-361 (GWLT…HGFL), 364-384 (WGWS…PLSA), 430-450 (LGGC…YWVL), 468-488 (LSVP…MFVQ), and 503-523 (VMMI…AGLV).

It belongs to the OXA1/ALB3/YidC family. Type 1 subfamily. As to quaternary structure, interacts with the Sec translocase complex via SecD. Specifically interacts with transmembrane segments of nascent integral membrane proteins during membrane integration.

It is found in the cell inner membrane. Functionally, required for the insertion and/or proper folding and/or complex formation of integral membrane proteins into the membrane. Involved in integration of membrane proteins that insert both dependently and independently of the Sec translocase complex, as well as at least some lipoproteins. Aids folding of multispanning membrane proteins. The chain is Membrane protein insertase YidC from Cupriavidus pinatubonensis (strain JMP 134 / LMG 1197) (Cupriavidus necator (strain JMP 134)).